Reading from the N-terminus, the 62-residue chain is Potassium channel toxin kappa-KTx 3.2 (62 aa).

The signal sequence occupies residues 1 to 26; sequence MKSTLMTASLLILVLLSIVDYASVYA. The propeptide occupies 27 to 36; it reads ELIDSEISME. 2 disulfide bridges follow: cysteine 43–cysteine 61 and cysteine 47–cysteine 57.

It belongs to the short scorpion toxin superfamily. Potassium channel inhibitor kappa-KTx family. Kappa-KTx 3 subfamily. In terms of tissue distribution, expressed by the venom gland.

It localises to the secreted. Functionally, potassium channel inhibitor (Kv). The chain is Potassium channel toxin kappa-KTx 3.2 from Heterometrus petersii (Asian forest scorpion).